Here is a 1665-residue protein sequence, read N- to C-terminus: Mediator of RNA polymerase II transcription subunit 13 (1665 aa).

4 disordered regions span residues 411–460, 482–512, 551–580, and 673–781; these read KETE…IDKN, INLDSKIMPPDSTSEEAVPDKENFKPKETKP, TVSQSAVTTNPPSVGSAPGPAPGPAPGTET, and LDSS…NQIS. The segment covering 415–445 has biased composition (acidic residues); that stretch reads PENESENDMEIDDLFGGDESDDNDDLEEAGN. The segment covering 499 to 512 has biased composition (basic and acidic residues); that stretch reads VPDKENFKPKETKP. A compositionally biased stretch (low complexity) spans 551 to 568; it reads TVSQSAVTTNPPSVGSAP. The span at 682 to 720 shows a compositional bias: acidic residues; it reads EGGEDIEDDDNDYEDEGDDDEEEEGEEEEEEESDEDEIS. Residues 728 to 762 are compositionally biased toward polar residues; the sequence is LKLNTQNESVPPQQSNYNPVNITDSGSNTTNNITD.

It belongs to the Mediator complex subunit 13 family. As to quaternary structure, component of the SRB8-11 complex, which itself associates with the Mediator complex.

The protein resides in the nucleus. In terms of biological role, component of the SRB8-11 complex. The SRB8-11 complex is a regulatory module of the Mediator complex which is itself involved in regulation of basal and activated RNA polymerase II-dependent transcription. The SRB8-11 complex may be involved in the transcriptional repression of a subset of genes regulated by Mediator. It may inhibit the association of the Mediator complex with RNA polymerase II to form the holoenzyme complex. The chain is Mediator of RNA polymerase II transcription subunit 13 (SSN2) from Candida albicans (strain SC5314 / ATCC MYA-2876) (Yeast).